Here is a 244-residue protein sequence, read N- to C-terminus: ATP-dependent dethiobiotin synthetase BioD 1 (244 aa).

ATP is bound at residue 12 to 17; it reads NVGKTV. Thr-16 contributes to the Mg(2+) binding site. Residue Lys-37 is part of the active site. Asp-68 is an ATP binding site. Mg(2+)-binding residues include Asp-68 and Glu-126. ATP is bound by residues 186-187, 215-217, and Glu-222; these read NR and PYL.

This sequence belongs to the dethiobiotin synthetase family. Homodimer. Mg(2+) serves as cofactor.

It is found in the cytoplasm. The enzyme catalyses (7R,8S)-7,8-diammoniononanoate + CO2 + ATP = (4R,5S)-dethiobiotin + ADP + phosphate + 3 H(+). It functions in the pathway cofactor biosynthesis; biotin biosynthesis; biotin from 7,8-diaminononanoate: step 1/2. Its function is as follows. Catalyzes a mechanistically unusual reaction, the ATP-dependent insertion of CO2 between the N7 and N8 nitrogen atoms of 7,8-diaminopelargonic acid (DAPA, also called 7,8-diammoniononanoate) to form a ureido ring. This chain is ATP-dependent dethiobiotin synthetase BioD 1, found in Pasteurella multocida (strain Pm70).